The sequence spans 127 residues: Fluoride-specific ion channel FluC 2 (127 aa).

4 helical membrane passes run 4–24 (IIAITGFAMLGGGLREGLSLL), 31–51 (FWITCLINIVGAFVLSLITNL), 62–82 (IVIGMSVGFVGSFTTFSTFTF), and 94–114 (VLALSYVAASLGLGLLAGLAG). Residues glycine 72 and threonine 75 each coordinate Na(+).

Belongs to the fluoride channel Fluc/FEX (TC 1.A.43) family.

It is found in the cell membrane. The enzyme catalyses fluoride(in) = fluoride(out). Its activity is regulated as follows. Na(+) is not transported, but it plays an essential structural role and its presence is essential for fluoride channel function. Its function is as follows. Fluoride-specific ion channel. Important for reducing fluoride concentration in the cell, thus reducing its toxicity. The protein is Fluoride-specific ion channel FluC 2 of Lactiplantibacillus plantarum (strain ATCC BAA-793 / NCIMB 8826 / WCFS1) (Lactobacillus plantarum).